Consider the following 290-residue polypeptide: Multiple sugar-binding transport system permease protein MsmF (290 aa).

The next 7 membrane-spanning stretches (helical) occupy residues 12–32 (GWTF…FPMF), 72–92 (FTLV…IIIA), 104–124 (FFRA…SLIF), 156–176 (VIAS…ILFL), 201–221 (FWSV…IMAL), 231–253 (IFAL…VYNY), and 260–280 (YGYA…VSVL). The ABC transmembrane type-1 domain maps to 70-281 (IGFTLVLTLA…IIIGIVSVLQ (212 aa)).

The protein belongs to the binding-protein-dependent transport system permease family. MalFG subfamily.

The protein resides in the cell membrane. Its function is as follows. Involved in a binding protein-dependent transport system responsible for the uptake of melibiose, raffinose and isomaltotriose. The chain is Multiple sugar-binding transport system permease protein MsmF (msmF) from Streptococcus mutans serotype c (strain ATCC 700610 / UA159).